The chain runs to 499 residues: MDTSPLCFSILLVLCIFIQSSALGQSLKPEPFGRRAQAVETNKTLHEMKTRFLLFGETNQGCQIRINHPDTLQECGFNSSLPLVMIIHGWSVDGVLENWIWQMVAALKSQPAQPVNVGLVDWITLAHDHYTIAVRNTRLVGKEVAALLRWLEESVQLSRSHVHLIGYSLGAHVSGFAGSSIGGTHKIGRITGLDAAGPLFEGSAPSNRLSPDDANFVDAIHTFTREHMGLSVGIKQPIGHYDFYPNGGSFQPGCHFLELYRHIAQHGFNAITQTIKCSHERSVHLFIDSLLHAGTQSMAYPCGDMNSFSQGLCLSCKKGRCNTLGYHVRQEPRSKSKRLFLVTRAQSPFKVYHYQFKIQFINQTETPIQTTFTMSLLGTKEKMQKIPITLGKGIASNKTYSFLITLDVDIGELIMIKFKWENSAVWANVWDTVQTIIPWSTGPRHSGLVLKTIRVKAGETQQRMTFCSENTDDLLLRPTQEKIFVKCEIKSKTSKRKIR.

Residues 1–22 (MDTSPLCFSILLVLCIFIQSSA) form the signal peptide. Asparagine 42 and asparagine 78 each carry an N-linked (GlcNAc...) asparagine glycan. Serine 168 functions as the Nucleophile in the catalytic mechanism. Aspartate 194 (charge relay system) is an active-site residue. The interval 254-277 (CHFLELYRHIAQHGFNAITQTIKC) is essential for determining substrate specificity. The active-site Charge relay system is histidine 279. Positions 352 to 486 (YHYQFKIQFI…RPTQEKIFVK (135 aa)) constitute a PLAT domain. Residues asparagine 362 and asparagine 397 are each glycosylated (N-linked (GlcNAc...) asparagine).

Belongs to the AB hydrolase superfamily. Lipase family. In terms of assembly, homodimer.

The protein localises to the secreted. The enzyme catalyses a triacylglycerol + H2O = a diacylglycerol + a fatty acid + H(+). It carries out the reaction a 1-acyl-sn-glycero-3-phosphocholine + H2O = sn-glycerol 3-phosphocholine + a fatty acid + H(+). The catalysed reaction is a 1,2-diacyl-sn-glycero-3-phosphocholine + H2O = a 2-acyl-sn-glycero-3-phosphocholine + a fatty acid + H(+). It catalyses the reaction 1,2,3-tri-(9Z-octadecenoyl)-glycerol + H2O = di-(9Z)-octadecenoylglycerol + (9Z)-octadecenoate + H(+). The enzyme catalyses 1,2-di-(9Z-octadecenoyl)-sn-glycero-3-phosphocholine + H2O = (9Z-octadecenoyl)-sn-glycero-3-phosphocholine + (9Z)-octadecenoate + H(+). It carries out the reaction 1,2,3-tributanoylglycerol + H2O = dibutanoylglycerol + butanoate + H(+). The catalysed reaction is 1,2-dihexadecanoyl-sn-glycero-3-phosphocholine + H2O = hexadecanoyl-sn-glycero-3-phosphocholine + hexadecanoate + H(+). It catalyses the reaction 1,2-di-(9Z-octadecenoyl)-sn-glycerol + H2O = 2-(9Z-octadecenoyl)-glycerol + (9Z)-octadecenoate + H(+). The enzyme catalyses 1,2,3-tri-(9Z-octadecenoyl)-glycerol + H2O = 2,3-di-(9Z)-octadecenoyl-sn-glycerol + (9Z)-octadecenoate + H(+). It carries out the reaction 1-(9Z-octadecenoyl)-sn-glycero-3-phospho-L-serine + H2O = sn-glycero-3-phospho-L-serine + (9Z)-octadecenoate + H(+). The catalysed reaction is 1-hexadecanoyl-sn-glycero-3-phosphocholine + H2O = sn-glycerol 3-phosphocholine + hexadecanoate + H(+). It catalyses the reaction 1,3-di-(9Z-octadecenoyl)-glycerol + H2O = 3-(9Z-octadecenoyl)-sn-glycerol + (9Z)-octadecenoate + H(+). Its activity is regulated as follows. Phospholipase A1 and triacylglycerol lipase are inhibited by sphingomyelin. Catalyzes the hydrolysis of triglycerides and phospholipids present in circulating plasma lipoproteins, including chylomicrons, intermediate density lipoproteins (IDL), low density lipoproteins (LDL) of large size and high density lipoproteins (HDL), releasing free fatty acids (FFA) and smaller lipoprotein particles. Also exhibits lysophospholipase activity. Can hydrolyze both neutral lipid and phospholipid substrates but shows a greater binding affinity for neutral lipid substrates than phospholipid substrates. In native LDL, preferentially hydrolyzes the phosphatidylcholine species containing polyunsaturated fatty acids at sn-2 position. In Homo sapiens (Human), this protein is Hepatic triacylglycerol lipase (LIPC).